Reading from the N-terminus, the 407-residue chain is ATP phosphoribosyltransferase regulatory subunit (407 aa).

It belongs to the class-II aminoacyl-tRNA synthetase family. HisZ subfamily. As to quaternary structure, heteromultimer composed of HisG and HisZ subunits.

It localises to the cytoplasm. It participates in amino-acid biosynthesis; L-histidine biosynthesis; L-histidine from 5-phospho-alpha-D-ribose 1-diphosphate: step 1/9. Functionally, required for the first step of histidine biosynthesis. May allow the feedback regulation of ATP phosphoribosyltransferase activity by histidine. The polypeptide is ATP phosphoribosyltransferase regulatory subunit (Rippkaea orientalis (strain PCC 8801 / RF-1) (Cyanothece sp. (strain PCC 8801))).